The sequence spans 33 residues: Mu/omega-theraphotoxin-Tap2a (33 aa).

Cystine bridges form between cysteine 2-cysteine 17, cysteine 9-cysteine 22, and cysteine 16-cysteine 29.

The protein belongs to the neurotoxin 10 (Hwtx-1) family. 59 (Tltx) subfamily. In terms of tissue distribution, expressed by the venom gland.

It is found in the secreted. Gating-modifier toxin that inhibits both sodium (Nav) and calcium (Cav3) channels by inducing hyperpolarizing shift in voltage-dependence of activation and steady state inactivation. Inhibits Nav1.1/SCN1A, Nav1.2/SCN2A, Nav1.6/SCN6A, Nav1.7/SCN9A and Cav3.1/CACNA1G sodium and calcium channels at nanomolar concentrations (IC(50)=169-621 nM). Surprisingly, selectively slows fast inactivation of Nav1.3/SCN3A. Also shows moderate inhibition of Nav1.3/SCN3A sodium channels (IC(50)=1216 nM). The sequence is that of Mu/omega-theraphotoxin-Tap2a from Theraphosa apophysis (Goliath pinkfoot tarantula).